The primary structure comprises 525 residues: MIKNIDRHRILILDFGSQYTQLLARRIREMGVYSELWPWDVAAERIQAFHPQGIILSGGPESATENDTPRAPDIIFTLGVPVLGICYGMQTMAIQLGGTVSNTHQGEFGYAPLALKNKNALIDGLEDFVNANNEPCLKVWMSHADKVTKLPEHFTCIASTETCPIAIMAHPEKHFYGVQFHPEVTHTLQGQSLLKRFVLQICQCEPLWTPRNIIDQTLSELKDQIGDDQVILGLSGGVDSAVTAILLHRAIGKSLTCVFVDNGLLRLNESQQVLNIFQDQFGLNIIHVSAANRFMNALKGIQDPEKKRKVIGRVFVDIFDEQAAKQKGVKWLAQGTIYTDLVESAASGTAKSHLIKSHHNVAGLPKEMKLGLIEPLKELFKDEVRQLGLELGLPNAMLHRHPFPGPGLGVRVLGEVKQEYCDLLRQADAIFIQELQKAELYQKVSQAFAVFLPIRSVGVMGDGRKYEWVIALRAIETVDFMTAHWAELPYDLLGRVSNRIINEVKGISRVVYDISGKPPATIEWE.

A Glutamine amidotransferase type-1 domain is found at 9-207 (RILILDFGSQ…VLQICQCEPL (199 aa)). Catalysis depends on Cys-86, which acts as the Nucleophile. Catalysis depends on residues His-181 and Glu-183. Residues 208-400 (WTPRNIIDQT…LGLPNAMLHR (193 aa)) enclose the GMPS ATP-PPase domain. 235–241 (SGGVDSA) lines the ATP pocket.

In terms of assembly, homodimer.

The enzyme catalyses XMP + L-glutamine + ATP + H2O = GMP + L-glutamate + AMP + diphosphate + 2 H(+). It participates in purine metabolism; GMP biosynthesis; GMP from XMP (L-Gln route): step 1/1. Functionally, catalyzes the synthesis of GMP from XMP. This is GMP synthase [glutamine-hydrolyzing] from Hamiltonella defensa subsp. Acyrthosiphon pisum (strain 5AT).